A 155-amino-acid polypeptide reads, in one-letter code: Transcriptional repressor NrdR (155 aa).

A zinc finger spans residues 3 to 34 (CPFCHAEETKVVDSRLVADGAQVRRRRECLEC). Residues 49–139 (PLIIKRDGRR…VYKRFKDVSD (91 aa)) form the ATP-cone domain.

This sequence belongs to the NrdR family. Requires Zn(2+) as cofactor.

In terms of biological role, negatively regulates transcription of bacterial ribonucleotide reductase nrd genes and operons by binding to NrdR-boxes. This chain is Transcriptional repressor NrdR, found in Legionella pneumophila (strain Paris).